The chain runs to 643 residues: 1-deoxy-D-xylulose-5-phosphate synthase (643 aa).

Residues His78 and Ala119–Ser121 contribute to the thiamine diphosphate site. Residue Asp150 coordinates Mg(2+). Thiamine diphosphate contacts are provided by residues Gly151–Ser152, Asn179, Tyr288, and Glu370. Residue Asn179 participates in Mg(2+) binding.

The protein belongs to the transketolase family. DXPS subfamily. As to quaternary structure, homodimer. The cofactor is Mg(2+). It depends on thiamine diphosphate as a cofactor.

It catalyses the reaction D-glyceraldehyde 3-phosphate + pyruvate + H(+) = 1-deoxy-D-xylulose 5-phosphate + CO2. It functions in the pathway metabolic intermediate biosynthesis; 1-deoxy-D-xylulose 5-phosphate biosynthesis; 1-deoxy-D-xylulose 5-phosphate from D-glyceraldehyde 3-phosphate and pyruvate: step 1/1. Catalyzes the acyloin condensation reaction between C atoms 2 and 3 of pyruvate and glyceraldehyde 3-phosphate to yield 1-deoxy-D-xylulose-5-phosphate (DXP). The protein is 1-deoxy-D-xylulose-5-phosphate synthase of Brucella abortus (strain 2308).